Consider the following 354-residue polypeptide: Protein sex-lethal (354 aa).

Positions Met-1–Tyr-21 are disordered. 2 consecutive RRM domains span residues Thr-125–Pro-203 and Thr-211–Glu-291.

In terms of assembly, part of a complex containing fl(2)d, Sxl and vir. Part of a complex composed of at least mei-P26, bam, bgcn and Sxl; this complex is involved in translational repression of nanos mRNA. interacts with mei-p26. Interacts with nito. Interacts with Unr; cooperates with Unr to prevent translation of msl-2 transcripts. Interacts with how; promoting nuclear retention of msl-2 transcripts. In terms of tissue distribution, expressed in somatic tissues, but not in the pole cells, which are the precursors of the germline. Expressed in the anterior of the germarium.

It localises to the nucleus. Its subcellular location is the cytoplasm. Its function is as follows. Sex determination switch protein, which controls sexual development and dosage compensation in females. Sxl protein is only active in females: it is inactive in males throughout development. Acts as a mRNA-binding protein, which specifically binds to a subset of pre-mRNAs and mRNAs and regulates their processing and/or translation. Binds nanos mRNA and is involved in bam-bgcn mediated repression of nanos mRNA translation. Promotes sexual development by controlling the female-specific alternative splicing of the transformer (tra) pre-mRNA: binds tightly to a characteristic uridine-rich polypyrimidine tract at the non-sex specific 3' splice site in one of the tra introns, preventing the general splicing factor U2AF from binding to this site and forcing it to bind to the female-specific 3' splice site. Acts as an inhibitor of dosage compensation in females by preventing production of msl-2 protein, an essential component of the MSL complex, the complex that mediates X-chromosome dosage compensation. Specifically binds to uridine stretches in both the 5'- and 3'-UTR of msl-2 transcripts. Sxl first acts at the splicing level by promoting retention of an intron in the 5' UTR of msl-2 pre-mRNA. The retained intron contains Sxl-binding sites that are required for subsequent steps of repression: after msl-2 mRNA export into the cytoplasm, Sxl coordinates its translational repression by targeting early steps of translation initiation. Together with how, Sxl also prevents production of msl-2 protein by preventing nuclear export of msl-2 transcripts. Embryo-specific product, which is expressed early only in female embryos and specifies female-adult specific splicing. This is Protein sex-lethal from Drosophila melanogaster (Fruit fly).